Reading from the N-terminus, the 117-residue chain is Large ribosomal subunit protein uL18 (117 aa).

Belongs to the universal ribosomal protein uL18 family. Part of the 50S ribosomal subunit; part of the 5S rRNA/L5/L18/L25 subcomplex. Contacts the 5S and 23S rRNAs.

In terms of biological role, this is one of the proteins that bind and probably mediate the attachment of the 5S RNA into the large ribosomal subunit, where it forms part of the central protuberance. In Leuconostoc mesenteroides subsp. mesenteroides (strain ATCC 8293 / DSM 20343 / BCRC 11652 / CCM 1803 / JCM 6124 / NCDO 523 / NBRC 100496 / NCIMB 8023 / NCTC 12954 / NRRL B-1118 / 37Y), this protein is Large ribosomal subunit protein uL18.